The following is a 308-amino-acid chain: Uricase-2 (308 aa).

Active-site charge relay system residues include lysine 17 and threonine 63. 7 residues coordinate urate: threonine 63, aspartate 64, phenylalanine 165, arginine 182, valine 237, glutamine 238, and asparagine 264. Histidine 266 (charge relay system) is an active-site residue. The short motif at 306–308 is the Microbody targeting signal element; the sequence is SKL.

This sequence belongs to the uricase family. Homotetramer. As to expression, expressed predominantly in the uninfected cells of the central tissue of the root nodule. Also expressed in the nodule parenchyma cells and vascular tissue, in the roots, stems and leaves of uninfected adult plants, and in the cotyledons, roots and hypocotyls of developing seedlings. Localized to the metaxylem parenchyma cells and phloem fibers of developing roots.

The protein localises to the peroxisome. The enzyme catalyses urate + O2 + H2O = 5-hydroxyisourate + H2O2. It functions in the pathway purine metabolism; urate degradation; (S)-allantoin from urate: step 1/3. In terms of biological role, catalyzes the oxidation of uric acid to 5-hydroxyisourate, which is further processed to form (S)-allantoin. The sequence is that of Uricase-2 (URIII) from Phaseolus vulgaris (Kidney bean).